We begin with the raw amino-acid sequence, 494 residues long: UPF0371 protein stu1377 (494 aa).

It belongs to the UPF0371 family.

In Streptococcus thermophilus (strain ATCC BAA-250 / LMG 18311), this protein is UPF0371 protein stu1377.